Consider the following 148-residue polypeptide: Aspartate 1-decarboxylase (148 aa).

The active-site Schiff-base intermediate with substrate; via pyruvic acid is the Ser-25. Ser-25 bears the Pyruvic acid (Ser) mark. A substrate-binding site is contributed by Thr-57. Tyr-58 (proton donor) is an active-site residue. Position 73 to 75 (73 to 75) interacts with substrate; it reads GAA.

The protein belongs to the PanD family. As to quaternary structure, heterooctamer of four alpha and four beta subunits. Pyruvate is required as a cofactor. Post-translationally, is synthesized initially as an inactive proenzyme, which is activated by self-cleavage at a specific serine bond to produce a beta-subunit with a hydroxyl group at its C-terminus and an alpha-subunit with a pyruvoyl group at its N-terminus.

Its subcellular location is the cytoplasm. The enzyme catalyses L-aspartate + H(+) = beta-alanine + CO2. It functions in the pathway cofactor biosynthesis; (R)-pantothenate biosynthesis; beta-alanine from L-aspartate: step 1/1. Catalyzes the pyruvoyl-dependent decarboxylation of aspartate to produce beta-alanine. The polypeptide is Aspartate 1-decarboxylase (Rhodococcus erythropolis (strain PR4 / NBRC 100887)).